The primary structure comprises 174 residues: Small ribosomal subunit protein uS5 (174 aa).

The region spanning 18-81 (WQERVIQIRR…ADGKKHLIDI (64 aa)) is the S5 DRBM domain.

This sequence belongs to the universal ribosomal protein uS5 family. As to quaternary structure, part of the 30S ribosomal subunit. Contacts proteins S4 and S8.

With S4 and S12 plays an important role in translational accuracy. In terms of biological role, located at the back of the 30S subunit body where it stabilizes the conformation of the head with respect to the body. This chain is Small ribosomal subunit protein uS5, found in Trichormus variabilis (strain ATCC 29413 / PCC 7937) (Anabaena variabilis).